A 142-amino-acid chain; its full sequence is Large ribosomal subunit protein uL11 (142 aa).

Belongs to the universal ribosomal protein uL11 family. As to quaternary structure, part of the ribosomal stalk of the 50S ribosomal subunit. Interacts with L10 and the large rRNA to form the base of the stalk. L10 forms an elongated spine to which L12 dimers bind in a sequential fashion forming a multimeric L10(L12)X complex. One or more lysine residues are methylated.

Its function is as follows. Forms part of the ribosomal stalk which helps the ribosome interact with GTP-bound translation factors. The protein is Large ribosomal subunit protein uL11 of Pseudoalteromonas atlantica (strain T6c / ATCC BAA-1087).